Reading from the N-terminus, the 521-residue chain is Glucomannan 4-beta-mannosyltransferase 1 (521 aa).

The chain crosses the membrane as a helical span at residues 22 to 42 (VIVPLLRLAVAVCLTMSVLLF). The active site involves aspartate 123. Aspartate 182 and aspartate 184 together coordinate substrate. Residue aspartate 276 is part of the active site. A run of 4 helical transmembrane segments spans residues 355-375 (IIAH…TIFV), 391-411 (IITL…FFWI), 471-491 (VTEL…LAFG), and 495-515 (FFIY…GYVG).

This sequence belongs to the glycosyltransferase 2 family. Plant cellulose synthase-like A subfamily.

The protein localises to the golgi apparatus membrane. The enzyme catalyses GDP-mannose + (glucomannan)n = GDP + (glucomannan)n+1.. In terms of biological role, possesses glucomannan synthase and mannan synthase activities in vitro. Mannan synthase consists of a 4-beta-mannosyltransferase activity on mannan using GDP-mannose. The beta-1,4-mannan product is the backbone for galactomannan synthesis by galactomannan galactosyltransferase. Galactomannan is a noncellulosic polysaccharides of plant cell wall. This Oryza sativa subsp. japonica (Rice) protein is Glucomannan 4-beta-mannosyltransferase 1.